Consider the following 336-residue polypeptide: Probable allantoicase (336 aa).

The protein belongs to the allantoicase family.

It catalyses the reaction allantoate + H2O = (S)-ureidoglycolate + urea. It participates in nitrogen metabolism; (S)-allantoin degradation; (S)-ureidoglycolate from allantoate (aminidohydrolase route): step 1/1. The polypeptide is Probable allantoicase (Acinetobacter baumannii (strain ACICU)).